Here is a 154-residue protein sequence, read N- to C-terminus: MKLIEGQLKVVNGKKVAIVSTRWNHFIVDRLVEGAKDAFARHGGDEADLTHVLVPGAFELPMIIDKLLASGKYDAICALGAVIRGATPHFDYVSAEATKGIAMMSLKHQKPVSFGLLTTDNIEQSIERAGTKAGNKGFEAMTVVIEMLDLYENL.

5-amino-6-(D-ribitylamino)uracil-binding positions include Trp23, Ala57 to Glu59, and Ala81 to Ile83. Ala86 to Thr87 contacts (2S)-2-hydroxy-3-oxobutyl phosphate. His89 functions as the Proton donor in the catalytic mechanism. A 5-amino-6-(D-ribitylamino)uracil-binding site is contributed by Phe114. Arg128 is a (2S)-2-hydroxy-3-oxobutyl phosphate binding site.

The protein belongs to the DMRL synthase family.

It carries out the reaction (2S)-2-hydroxy-3-oxobutyl phosphate + 5-amino-6-(D-ribitylamino)uracil = 6,7-dimethyl-8-(1-D-ribityl)lumazine + phosphate + 2 H2O + H(+). It participates in cofactor biosynthesis; riboflavin biosynthesis; riboflavin from 2-hydroxy-3-oxobutyl phosphate and 5-amino-6-(D-ribitylamino)uracil: step 1/2. Catalyzes the formation of 6,7-dimethyl-8-ribityllumazine by condensation of 5-amino-6-(D-ribitylamino)uracil with 3,4-dihydroxy-2-butanone 4-phosphate. This is the penultimate step in the biosynthesis of riboflavin. This is 6,7-dimethyl-8-ribityllumazine synthase from Sulfurimonas denitrificans (strain ATCC 33889 / DSM 1251) (Thiomicrospira denitrificans (strain ATCC 33889 / DSM 1251)).